A 529-amino-acid polypeptide reads, in one-letter code: Protein PNS1 (529 aa).

The disordered stretch occupies residues 1 to 58; sequence MSQQYSYGGGGGAGYPPPQMQPPNSYAQANYQGQPQGAQNQYYNGQQPHHNAPQQYYG. Topologically, residues 1–84 are cytoplasmic; that stretch reads MSQQYSYGGG…LQPKPKFRDP (84 aa). A compositionally biased stretch (low complexity) spans 22–48; it reads PPNSYAQANYQGQPQGAQNQYYNGQQP. A helical membrane pass occupies residues 85–105; that stretch reads IFLVLFLLVFAGFIALSVICL. Topologically, residues 106-132 are extracellular; the sequence is RSYSNADVNVSIGRANVAGSTLNGHTA. Asn-114 carries N-linked (GlcNAc...) asparagine glycosylation. The helical transmembrane segment at 133-153 threads the bilayer; that stretch reads IMFMICCAVALVLSFVYILLV. Topologically, residues 154–158 are cytoplasmic; that stretch reads RTFPK. The chain crosses the membrane as a helical span at residues 159 to 179; it reads IILEATLLLTTLSNVAFCVYL. At 180-184 the chain is on the extracellular side; that stretch reads WVRGN. Residues 185–205 traverse the membrane as a helical segment; it reads TAAAIIFTIFAVLSVIAYFFM. Over 206–230 the chain is Cytoplasmic; that stretch reads RKRIPLAKLILVTVIRTAEQYKSVY. Residues 231–251 traverse the membrane as a helical segment; the sequence is VVALGGLIVETAFSAWTSWVV. At 252 to 271 the chain is on the extracellular side; it reads VAAYQRFEPSGQAAGSSSSN. Residue Asn-271 is glycosylated (N-linked (GlcNAc...) asparagine). Residues 272 to 292 form a helical membrane-spanning segment; it reads ASIIGIMVFIVFAYYWISEVI. Residues 293 to 294 are Cytoplasmic-facing; the sequence is KN. The helical transmembrane segment at 295 to 315 threads the bilayer; the sequence is IAFTTVAGIFGVAYYNANKVA. The Extracellular portion of the chain corresponds to 316–325; the sequence is NAAWGAFRRS. A helical transmembrane segment spans residues 326 to 346; sequence MTYSLGSICFGSLIVAILDLL. Topologically, residues 347–362 are cytoplasmic; that stretch reads RALFNILQSQAASDGD. A helical membrane pass occupies residues 363 to 383; the sequence is MTGQILACVAGCCVSCIQGLV. At 384 to 427 the chain is on the extracellular side; that stretch reads DYFNRYAYINIALYGNGYITAAKETWALLKDRGIDAIINDSLVN. A glycan (N-linked (GlcNAc...) asparagine) is linked at Asn-422. A helical membrane pass occupies residues 428–448; that stretch reads IVFNCGAFIIGLLTALFAFIY. At 449–464 the chain is on the cytoplasmic side; that stretch reads EQLTNPRYLQNDAGYY. Residues 465-485 traverse the membrane as a helical segment; that stretch reads SIVLLVAFGLGFNIALSVGAG. Residues 486 to 529 lie on the Extracellular side of the membrane; it reads SIASGVSTYFVALAEDPYILQGKNPELFEMIRQQYPQVVQGVNH.

It belongs to the CTL (choline transporter-like) family.

The protein resides in the cell membrane. In terms of biological role, probably involved in transport through the plasma membrane. The polypeptide is Protein PNS1 (PNS1) (Mycosarcoma maydis (Corn smut fungus)).